The following is a 288-amino-acid chain: Energy-coupling factor transporter ATP-binding protein EcfA2 (288 aa).

Positions 3–246 (IKLEQLGYCY…PDELVDLGLS (244 aa)) constitute an ABC transporter domain. 40–47 (GHTGSGKS) serves as a coordination point for ATP.

This sequence belongs to the ABC transporter superfamily. Energy-coupling factor EcfA family. As to quaternary structure, forms a stable energy-coupling factor (ECF) transporter complex composed of 2 membrane-embedded substrate-binding proteins (S component), 2 ATP-binding proteins (A component) and 2 transmembrane proteins (T component).

The protein resides in the cell membrane. In terms of biological role, ATP-binding (A) component of a common energy-coupling factor (ECF) ABC-transporter complex. Unlike classic ABC transporters this ECF transporter provides the energy necessary to transport a number of different substrates. The protein is Energy-coupling factor transporter ATP-binding protein EcfA2 of Listeria monocytogenes serotype 4b (strain F2365).